A 296-amino-acid chain; its full sequence is Heme oxygenase 1 (296 aa).

Residues 1 to 273 (METSQPHNAE…RMQADMLTTS (273 aa)) are Cytoplasmic-facing. Heme b contacts are provided by lysine 21, histidine 28, tyrosine 137, and arginine 186. Residues 231 to 264 (GHAVQPKAELRTRSVNKSHENSPAAGKESERTSR) form a disordered region. Positions 238–250 (AELRTRSVNKSHE) are enriched in basic and acidic residues. A helical; Anchor for type IV membrane protein transmembrane segment spans residues 274–296 (PLVRWLLALGFIATTVAVGLFAM).

The protein belongs to the heme oxygenase family. Homodimer and higher order homooligomer. Oligomerization is crucial for its stability and function in the endoplasmic reticulum. A soluble form arises by proteolytic removal of the membrane anchor.

It localises to the endoplasmic reticulum membrane. The catalysed reaction is heme b + 3 reduced [NADPH--hemoprotein reductase] + 3 O2 = biliverdin IXalpha + CO + Fe(2+) + 3 oxidized [NADPH--hemoprotein reductase] + 3 H2O + H(+). With respect to regulation, inhibited by metalloporphyrins in the following order of decreasing potency: tin mesoporphyrin &gt; tin protoporphyrin &gt; zinc protoporphyrin &gt; manganese protoporphyrin &gt; cobalt protoporphyrin. Functionally, catalyzes the oxidative cleavage of heme at the alpha-methene bridge carbon, released as carbon monoxide (CO), to generate biliverdin IXalpha, while releasing the central heme iron chelate as ferrous iron. Affords protection against programmed cell death and this cytoprotective effect relies on its ability to catabolize free heme and prevent it from sensitizing cells to undergo apoptosis. In terms of biological role, catalyzes the oxidative cleavage of heme at the alpha-methene bridge carbon, released as carbon monoxide (CO), to generate biliverdin IXalpha, while releasing the central heme iron chelate as ferrous iron. The sequence is that of Heme oxygenase 1 (HMOX1) from Gallus gallus (Chicken).